The sequence spans 247 residues: ATP synthase subunit a, chloroplastic (247 aa).

The next 5 membrane-spanning stretches (helical) occupy residues 38–58, 95–115, 134–154, 199–219, and 220–240; these read QVLI…TIAV, VPFI…GALL, INTT…AGFT, LVVV…VMFL, and GLFT…AYIG.

It belongs to the ATPase A chain family. F-type ATPases have 2 components, CF(1) - the catalytic core - and CF(0) - the membrane proton channel. CF(1) has five subunits: alpha(3), beta(3), gamma(1), delta(1), epsilon(1). CF(0) has four main subunits: a, b, b' and c.

The protein resides in the plastid. It localises to the chloroplast thylakoid membrane. Key component of the proton channel; it plays a direct role in the translocation of protons across the membrane. The chain is ATP synthase subunit a, chloroplastic from Liriodendron tulipifera (Tuliptree).